Here is a 194-residue protein sequence, read N- to C-terminus: 3-isopropylmalate dehydratase small subunit (194 aa).

Belongs to the LeuD family. LeuD type 1 subfamily. Heterodimer of LeuC and LeuD.

The enzyme catalyses (2R,3S)-3-isopropylmalate = (2S)-2-isopropylmalate. It participates in amino-acid biosynthesis; L-leucine biosynthesis; L-leucine from 3-methyl-2-oxobutanoate: step 2/4. Functionally, catalyzes the isomerization between 2-isopropylmalate and 3-isopropylmalate, via the formation of 2-isopropylmaleate. The protein is 3-isopropylmalate dehydratase small subunit of Brevibacillus brevis (strain 47 / JCM 6285 / NBRC 100599).